The chain runs to 145 residues: Large ribosomal subunit protein uL16 (145 aa).

The protein belongs to the universal ribosomal protein uL16 family. As to quaternary structure, part of the 50S ribosomal subunit.

Its function is as follows. Binds 23S rRNA and is also seen to make contacts with the A and possibly P site tRNAs. The polypeptide is Large ribosomal subunit protein uL16 (Herpetosiphon aurantiacus (strain ATCC 23779 / DSM 785 / 114-95)).